We begin with the raw amino-acid sequence, 178 residues long: Ribosome maturation factor RimM (178 aa).

One can recognise a PRC barrel domain in the interval 101-178 (DGEYYWYQLQ…EMQVDWDADF (78 aa)).

It belongs to the RimM family. As to quaternary structure, binds ribosomal protein uS19.

The protein resides in the cytoplasm. An accessory protein needed during the final step in the assembly of 30S ribosomal subunit, possibly for assembly of the head region. Essential for efficient processing of 16S rRNA. May be needed both before and after RbfA during the maturation of 16S rRNA. It has affinity for free ribosomal 30S subunits but not for 70S ribosomes. The polypeptide is Ribosome maturation factor RimM (Stutzerimonas stutzeri (strain A1501) (Pseudomonas stutzeri)).